The chain runs to 455 residues: Gastric inhibitory polypeptide receptor (455 aa).

An N-terminal signal peptide occupies residues 1 to 18; that stretch reads MPLRLLLLLLWLWGLSLQ. Residues 19 to 135 are Extracellular-facing; the sequence is RAETDSEGQT…DQKLILERLQ (117 aa). Cystine bridges form between cysteine 43/cysteine 67, cysteine 58/cysteine 100, and cysteine 81/cysteine 115. N-linked (GlcNAc...) asparagine glycosylation is found at asparagine 59, asparagine 69, and asparagine 74. The helical transmembrane segment at 136–158 threads the bilayer; the sequence is VVYTVGYSLSLATLLLALLILSL. At 159–166 the chain is on the cytoplasmic side; the sequence is FRRLHCTR. Residues 167-186 traverse the membrane as a helical segment; sequence NYIHMNLFTSFMLRAGAILT. Residues 187–214 lie on the Extracellular side of the membrane; that stretch reads RDQLLPPLGPYTGNQTPTLWNQALAACR. Residues 215–239 traverse the membrane as a helical segment; the sequence is TAQILTQYCVGANYTWLLVEGVYLH. The Cytoplasmic portion of the chain corresponds to 240–251; that stretch reads HLLVVVRRSEKG. Residues 252-275 form a helical membrane-spanning segment; the sequence is HFRCYLLLGWGAPALFVIPWVIVR. Residues 276-290 are Extracellular-facing; that stretch reads YLYENTQCWERNEVK. The chain crosses the membrane as a helical span at residues 291–316; the sequence is AIWWIIRTPILITILINFLIFIRILG. The Cytoplasmic segment spans residues 317-338; sequence ILVSKLRTRQMRCPDYRLRLAR. Residues 339 to 359 traverse the membrane as a helical segment; the sequence is STLTLMPLLGVHEVVFAPVTE. Topologically, residues 360 to 374 are extracellular; sequence EQAEGSLRFAKLAFE. The helical transmembrane segment at 375-395 threads the bilayer; that stretch reads IFLSSFQGFLVSVLYCFINKE. Residues 396–455 are Cytoplasmic-facing; that stretch reads VQSEIRRLRLSLQEQCPRPHLGQAPRAVPLSSAPQEAAIRNALPSGMLHVPGDEVLESYC.

It belongs to the G-protein coupled receptor 2 family. In terms of assembly, may form homodimers and heterodimers with GLP1R. Post-translationally, N-glycosylation is required for cell surface expression and lengthens receptor half-life by preventing degradation in the ER. Present in the pancreas as well as the gut, adipose tissue, heart, pituitary, and inner layers of the adrenal cortex, whereas it is not found in kidney, spleen, or liver. It is also expressed in several brain regions, including the cerebral cortex, hippocampus, and olfactory bulb.

It localises to the cell membrane. In terms of biological role, this is a receptor for GIP. The activity of this receptor is mediated by G proteins which activate adenylyl cyclase. This chain is Gastric inhibitory polypeptide receptor (Gipr), found in Rattus norvegicus (Rat).